Here is a 394-residue protein sequence, read N- to C-terminus: Suppressor APC domain-containing protein 2 (394 aa).

Disordered stretches follow at residues 1–23 (MAGA…STEG), 95–125 (LLSA…RLVF), and 150–188 (GPSA…SSSA). Residues 177-188 (SQSAALEPSSSA) show a composition bias toward polar residues. Threonine 219 carries the phosphothreonine modification. Residues 227 to 277 (GLLKQMKELEQEKEVLLQGLEMMARGRDWYQQQLQRVQERQRRLGQSRASA) adopt a coiled-coil conformation. A Phosphoserine modification is found at serine 284. Residues 336–384 (QQQTILMLKEQNRLLTQEVTEKSERITQLEQEKSALIKQLFEARALSQQ) adopt a coiled-coil conformation.

As to quaternary structure, interacts with a spindle orientation complex at least composed of GNAI1, GPSM2 and NUMA1. Interacts with GPSM2 (via TPR motifs); this interaction is required to prevent GPSM2 anchoring at the mitotic apical cortex and is inhibited in presence of NUMA1 in a dose dependent manner. Interacts with PARD3. In terms of tissue distribution, expressed in 5-month-old fetal tissues, including stomach, intestine, colon, liver, brain, lung, heart, spleen and kidney. Undetectable in non-cancerous adult tissues. Expressed in many primary gastric carcinoma, but almost not in adjacent normal mucosa. Expressed preferentially in M and G1 phases, compared to S and G2 phases. Expression is up-regulated in hepatocellular carcinoma (HCC) and colorectal cancer (CRC) tissues (at protein level).

The protein resides in the cytoplasm. It is found in the nucleus. It localises to the cell cortex. The protein localises to the apical cell membrane. Its subcellular location is the cell junction. The protein resides in the tight junction. Plays a role in planar mitotic spindle orientation in retinal progenitor cells (RPCs) and promotes the production of symmetric terminal divisions. Negatively regulates the mitotic apical cortex localization of GPSM2. Involved also in positive regulation of cell proliferation and tumor cell growth. In Homo sapiens (Human), this protein is Suppressor APC domain-containing protein 2.